We begin with the raw amino-acid sequence, 71 residues long: Small integral membrane protein 31 (71 aa).

The helical transmembrane segment at 8-28 threads the bilayer; that stretch reads LEVAFILLAFFIFSLFTLASI. Residues 48 to 57 show a composition bias toward basic residues; that stretch reads RKRKEFKGKK. Residues 48 to 71 form a disordered region; that stretch reads RKRKEFKGKKNCSDEEHKIETMQP. A glycan (N-linked (GlcNAc...) asparagine) is linked at Asn58. Basic and acidic residues predominate over residues 58-71; that stretch reads NCSDEEHKIETMQP.

The protein resides in the membrane. The protein is Small integral membrane protein 31 of Mus musculus (Mouse).